A 394-amino-acid chain; its full sequence is Obg-like ATPase 1 (394 aa).

Residues 25–282 (LKIGIVGLPN…MPPDEAAKYC (258 aa)) enclose the OBG-type G domain. Residues 34–39 (NVGKST), 56–60 (FCTID), and 94–97 (DIAG) each bind ATP. 34–39 (NVGKST) is a binding site for GTP. Mg(2+)-binding residues include serine 38 and threonine 58. Residues phenylalanine 129 and asparagine 230 each coordinate GTP. Residues 230 to 231 (NM), methionine 231, and 263 to 265 (SCA) contribute to the ATP site. 263-265 (SCA) contributes to the GTP binding site. The 84-residue stretch at 303 to 386 (HLIYFFTAGP…QDGDIIFFKF (84 aa)) folds into the TGS domain.

Belongs to the TRAFAC class OBG-HflX-like GTPase superfamily. OBG GTPase family. YchF/OLA1 subfamily. Monomer (Potential). Interacts with GAP1. It depends on Mg(2+) as a cofactor.

The protein localises to the cell membrane. It is found in the cytoplasm. Its subcellular location is the cytosol. With respect to regulation, activated by GAP1. Hydrolyzes ATP, and can also hydrolyze GTP with lower efficiency. Has lower affinity for GTP (Potential). Exhibits GTPase activity. Exhibits similar binding affinities and hydrolytic activities toward both GTP and ATP. Binds to the 26 S ribosomal RNA in vitro, but not to the 5.8 S or 18 S rRNA. Confers sensitivity to salinity stress by suppressing the anti-oxidation enzymatic activities and increasing lipid peroxidation thus leading to the accumulation of reactive oxygen species (ROS). The chain is Obg-like ATPase 1 from Oryza sativa subsp. japonica (Rice).